A 183-amino-acid chain; its full sequence is Probable calcium-binding protein CML47 (183 aa).

2 consecutive EF-hand domains span residues 112–147 and 149–183; these read MGKE…LGYD and CTKM…KSFS. 9 residues coordinate Ca(2+): aspartate 125, asparagine 127, aspartate 129, glutamate 136, aspartate 162, asparagine 164, aspartate 166, lysine 168, and glutamate 173.

In terms of biological role, potential calcium sensor. This chain is Probable calcium-binding protein CML47 (CML47), found in Arabidopsis thaliana (Mouse-ear cress).